Here is a 663-residue protein sequence, read N- to C-terminus: MVKERCPKQAFQDSLEDIKERMKEKRIKKLAKVATVNKTLCTKVQILNSGSTAIKNYKANNTALALALEAEKLKTRQAQDLILGLKREHQRLIFEIFMLRRRLQSQQGRDTAESKLASLKDIIAKVTHNLLETASLLEPAHLLCSSANNNTPNPSKVEEKLSSGASAILRLPSHAPISDTLPKNVIPNRLEPEQRNFKDKVVLEANRNTAGVNRQSRGRRSHSNQPSFTSRLEECNNEDKTESGATMNKNVSLRRRASSLNICLEESLPLEDTNVNSEHTVVETERPFPTEEFSNESRTDREIDNVDNPASPLKVKCFPHANGSKMTGLASEAKQTSNKNKEEPRVGRERVKKGKAERVAVSQMKKPWENSKPRARSKSRDRSASKKSVAKEKMNSSLNSGDAFDFACEESIHVTPFRQNKQEESQNESSLEISSSEGELDDSLYKPYKDKSKNKNLKPDIAPVPLRSRSKRNTARKNSIAENELMSDVQAEANEKKITRNGLKRKSENSFTESAETYREKSFMPTCINTNNAIAENPEVKVFSDECNGGIIYTADEPSGASTPRISLSDVTNLPGNTDAKKHINLLFNEDEMKRSSTPSRKRRCKVSINYAEPKLSGKLRRGDPFTDSEFLQSPIFKNESKRNSLNRQSLSRYNEVFVGCRR.

Coiled-coil stretches lie at residues 8–29 and 110–132; these read KQAFQDSLEDIKERMKEKRIKK and DTAESKLASLKDIIAKVTHNLLE. Disordered stretches follow at residues 207 to 250, 278 to 401, and 417 to 478; these read RNTA…MNKN, EHTV…LNSG, and FRQN…ARKN. 4 stretches are compositionally biased toward basic and acidic residues: residues 231 to 242, 280 to 304, 339 to 358, and 366 to 394; these read RLEECNNEDKTE, TVVETERPFPTEEFSNESRTDREID, KNKEEPRVGRERVKKGKAER, and KPWENSKPRARSKSRDRSASKKSVAKEKM. The segment covering 427-437 has biased composition (low complexity); that stretch reads NESSLEISSSE. The segment covering 443–453 has biased composition (basic and acidic residues); sequence SLYKPYKDKSK.

Belongs to the shugoshin family. In terms of assembly, binds microtubules. Post-translationally, ubiquitinated by the anaphase promoting complex (APC) at the onset of anaphase, conducting to its degradation.

It is found in the nucleus. Its subcellular location is the chromosome. It localises to the centromere. The protein localises to the kinetochore. The protein resides in the nucleus speckle. Plays a central role in chromosome cohesion during mitosis by preventing premature dissociation of cohesin complex from centromeres after prophase, when most of cohesin complex dissociates from chromosomes arms. May act by preventing phosphorylation of the stag2 subunit of cohesin complex at the centromere, ensuring cohesin persistence at centromere until cohesin cleavage by espl1/separase at anaphase. May regulate kinetochore microtubule stability in mitosis, possibly to sense tension on mitotic chromosomes. The chain is Shugoshin 1 from Xenopus laevis (African clawed frog).